Reading from the N-terminus, the 181-residue chain is Large ribosomal subunit protein uL5 (181 aa).

This sequence belongs to the universal ribosomal protein uL5 family. Part of the 50S ribosomal subunit; part of the 5S rRNA/L5/L18/L25 subcomplex. Contacts the 5S rRNA and the P site tRNA. Forms a bridge to the 30S subunit in the 70S ribosome.

Its function is as follows. This is one of the proteins that bind and probably mediate the attachment of the 5S RNA into the large ribosomal subunit, where it forms part of the central protuberance. In the 70S ribosome it contacts protein S13 of the 30S subunit (bridge B1b), connecting the 2 subunits; this bridge is implicated in subunit movement. Contacts the P site tRNA; the 5S rRNA and some of its associated proteins might help stabilize positioning of ribosome-bound tRNAs. This is Large ribosomal subunit protein uL5 from Campylobacter hominis (strain ATCC BAA-381 / DSM 21671 / CCUG 45161 / LMG 19568 / NCTC 13146 / CH001A).